Consider the following 601-residue polypeptide: Arginine--tRNA ligase (601 aa).

A 'HIGH' region motif is present at residues 133-143 (PNTNKPLHLGH).

The protein belongs to the class-I aminoacyl-tRNA synthetase family. In terms of assembly, monomer.

It is found in the cytoplasm. It catalyses the reaction tRNA(Arg) + L-arginine + ATP = L-arginyl-tRNA(Arg) + AMP + diphosphate. The chain is Arginine--tRNA ligase from Flavobacterium psychrophilum (strain ATCC 49511 / DSM 21280 / CIP 103535 / JIP02/86).